A 457-amino-acid chain; its full sequence is Argininosuccinate lyase (457 aa).

Belongs to the lyase 1 family. Argininosuccinate lyase subfamily.

The protein resides in the cytoplasm. The catalysed reaction is 2-(N(omega)-L-arginino)succinate = fumarate + L-arginine. It participates in amino-acid biosynthesis; L-arginine biosynthesis; L-arginine from L-ornithine and carbamoyl phosphate: step 3/3. In Pasteurella multocida (strain Pm70), this protein is Argininosuccinate lyase.